Consider the following 121-residue polypeptide: Large ribosomal subunit protein uL18 (121 aa).

It belongs to the universal ribosomal protein uL18 family. In terms of assembly, part of the 50S ribosomal subunit; part of the 5S rRNA/L5/L18/L25 subcomplex. Contacts the 5S and 23S rRNAs.

This is one of the proteins that bind and probably mediate the attachment of the 5S RNA into the large ribosomal subunit, where it forms part of the central protuberance. This is Large ribosomal subunit protein uL18 from Paraburkholderia phymatum (strain DSM 17167 / CIP 108236 / LMG 21445 / STM815) (Burkholderia phymatum).